The following is a 165-amino-acid chain: Choriogonadotropin subunit beta 7 (165 aa).

An N-terminal signal peptide occupies residues 1 to 20; it reads MEMFQGLLLLLLLSMGGTWA. Intrachain disulfides connect C29/C77, C43/C92, C46/C130, C54/C108, C58/C110, and C113/C120. N-linked (GlcNAc...) asparagine glycosylation is found at N33 and N50. A disordered region spans residues 131–165; sequence DDPRFQASSSSKAPPPSLPSPSRLPGPSDTPILPQ. Residues S141, S147, S152, and S158 are each glycosylated (O-linked (GalNAc...) serine). A compositionally biased stretch (pro residues) spans 143–154; that stretch reads APPPSLPSPSRL.

It belongs to the glycoprotein hormones subunit beta family. Heterodimer of a common alpha chain identical in LH, FSH, TSH and HCG and a unique beta chain distinct in each of the hormones and confers receptor and biological specificity. High expression in the placenta throughout pregnancy.

The protein localises to the secreted. Beta subunit of the human chorionic gonadotropin (hCG). hCG is a complex glycoprotein composed of two glycosylated subunits alpha and beta which are non-covalently associated. The alpha subunit is identical to those in the pituitary gonadotropin hormones (LH, FSH and TSH). The beta subunits are distinct in each of the hormones and confer receptor and biological specificity. Has an essential role for pregnancy and maternal adaptation. Stimulates the ovaries to synthesize the steroids that are essential for the maintenance of pregnancy. The chain is Choriogonadotropin subunit beta 7 from Homo sapiens (Human).